The primary structure comprises 548 residues: Spindle pole body-associated protein cut12 (548 aa).

The interval phenylalanine 122–glutamate 325 is interaction with plo1. The disordered stretch occupies residues lysine 123–proline 182. Polar residues predominate over residues leucine 126–aspartate 139. Basic and acidic residues-rich tracts occupy residues asparagine 140–asparagine 151 and tyrosine 161–proline 182. A coiled-coil region spans residues lysine 261–histidine 312. The segment covering proline 344–serine 356 has biased composition (polar residues). Disordered regions lie at residues proline 344–asparagine 369 and serine 510–serine 548. The stretch at arginine 522 to serine 548 forms a coiled coil.

In terms of assembly, self-associates. Interacts with plo1.

The protein resides in the cytoplasm. It localises to the cytoskeleton. Its subcellular location is the microtubule organizing center. The protein localises to the spindle pole body. Functionally, required for bipolar spindle formation. May act as a regulator of the p34cdc2/cyclin B kinase. Required for full activation of the plo1 kinase. However, in cut12.1 cells at restrictive temperature the H1 kinase does rise concomitant with entry into mitosis, indicating that cut12 is not required for activation of p34cdc2/cyclin B. The cut12.s11 allele may promote cdc2-independent phosphorylation of SPB proteins thereby overcoming the requirement for cdc25 in cell cycle progression. This chain is Spindle pole body-associated protein cut12 (cut12), found in Schizosaccharomyces pombe (strain 972 / ATCC 24843) (Fission yeast).